The following is a 248-amino-acid chain: (2S)-[(R)-hydroxy(phenyl)methyl]succinyl-CoA dehydrogenase subunit BbsD (248 aa).

Positions 15, 36, 62, 63, 89, 153, and 157 each coordinate NAD(+). Catalysis depends on Tyr-153, which acts as the Proton acceptor.

Belongs to the short-chain dehydrogenases/reductases (SDR) family. Heterotetramer composed of 2 inactive BbsC subunits and 2 active BbsD subunits.

It carries out the reaction (2S)-[(R)-hydroxy(phenyl)methyl]succinyl-CoA + NAD(+) = (S)-2-benzoylsuccinyl-CoA + NADH + H(+). It functions in the pathway xenobiotic degradation; toluene degradation. Its activity is regulated as follows. Activity is probably regulated by the inactive BbsC subunit. Its function is as follows. Involved in an anaerobic toluene degradation pathway. Active subunit that catalyzes the oxidation of 2-(alpha-hydroxybenzyl)succinyl-CoA to 2-benzoylsuccinyl-CoA. In vitro, can catalyze the NADH-dependent reduction of the artificial substrates 2,2-dichloroacetophene and 2,4'-dichloroacetophenone. This chain is (2S)-[(R)-hydroxy(phenyl)methyl]succinyl-CoA dehydrogenase subunit BbsD, found in Thauera aromatica.